A 55-amino-acid polypeptide reads, in one-letter code: AETLVAAKIVKDVKSGVKVLANGELTAKXLTVKVAKVSAAAKAAIEAAGGSVEEA.

This sequence belongs to the universal ribosomal protein uL15 family. As to quaternary structure, part of the 50S ribosomal subunit.

Its function is as follows. Binds to the 23S rRNA. This is Large ribosomal subunit protein uL15 (rplO) from Lactococcus lactis subsp. cremoris (Streptococcus cremoris).